Here is a 302-residue protein sequence, read N- to C-terminus: Intermediate capsid protein VP8 (302 aa).

The protein localises to the virion. Its function is as follows. Self assembles to form an icosahedral capsid with a T=13 symmetry, which consists of 230 trimers, with channels at each of its five-fold vertices. This chain is Intermediate capsid protein VP8 (Segment-8), found in Banna virus (BAV).